Consider the following 414-residue polypeptide: Glycogen synthase (414 aa).

This sequence belongs to the glycosyltransferase group 1 family.

It carries out the reaction [(1-&gt;4)-alpha-D-glucosyl](n) + UDP-alpha-D-glucose = [(1-&gt;4)-alpha-D-glucosyl](n+1) + UDP + H(+). It participates in glycan biosynthesis; glycogen biosynthesis. Glucosyltransferase that uses UDP-glucose as the sugar donor to elongate alpha-(1-&gt;4)-glucans. Is involved in the biosynthesis of both 6-O-methylglucosyl lipopolysaccharides (MGLP) and glycogen. May also use ADP-glucose as substrate. The protein is Glycogen synthase of Mycobacterium tuberculosis (strain CDC 1551 / Oshkosh).